We begin with the raw amino-acid sequence, 276 residues long: Putative pyruvate, phosphate dikinase regulatory protein 1 (276 aa).

Position 157–164 (157–164) interacts with ADP; that stretch reads GVSRTSKT.

The protein belongs to the pyruvate, phosphate/water dikinase regulatory protein family. PDRP subfamily.

The catalysed reaction is N(tele)-phospho-L-histidyl/L-threonyl-[pyruvate, phosphate dikinase] + ADP = N(tele)-phospho-L-histidyl/O-phospho-L-threonyl-[pyruvate, phosphate dikinase] + AMP + H(+). It catalyses the reaction N(tele)-phospho-L-histidyl/O-phospho-L-threonyl-[pyruvate, phosphate dikinase] + phosphate + H(+) = N(tele)-phospho-L-histidyl/L-threonyl-[pyruvate, phosphate dikinase] + diphosphate. Its function is as follows. Bifunctional serine/threonine kinase and phosphorylase involved in the regulation of the pyruvate, phosphate dikinase (PPDK) by catalyzing its phosphorylation/dephosphorylation. This is Putative pyruvate, phosphate dikinase regulatory protein 1 from Staphylococcus haemolyticus (strain JCSC1435).